We begin with the raw amino-acid sequence, 118 residues long: Probable mitochondrial pyruvate carrier 2 (118 aa).

The next 3 membrane-spanning stretches (helical) occupy residues 19–35, 50–66, and 72–94; these read VHFWAPAMKWTLVLSGI, YAALCATGAIWTRWSLI, and YFNATVNFFLAIVGAVQVSRILV.

The protein belongs to the mitochondrial pyruvate carrier (MPC) (TC 2.A.105) family. As to quaternary structure, the functional 150 kDa pyruvate import complex is a heteromer of mpc1 and mpc2.

Its subcellular location is the mitochondrion inner membrane. In terms of biological role, mediates the uptake of pyruvate into mitochondria. The chain is Probable mitochondrial pyruvate carrier 2 from Schizosaccharomyces pombe (strain 972 / ATCC 24843) (Fission yeast).